Consider the following 186-residue polypeptide: Elongation factor P (186 aa).

It belongs to the elongation factor P family.

The protein resides in the cytoplasm. The protein operates within protein biosynthesis; polypeptide chain elongation. In terms of biological role, involved in peptide bond synthesis. Stimulates efficient translation and peptide-bond synthesis on native or reconstituted 70S ribosomes in vitro. Probably functions indirectly by altering the affinity of the ribosome for aminoacyl-tRNA, thus increasing their reactivity as acceptors for peptidyl transferase. This is Elongation factor P from Brucella ovis (strain ATCC 25840 / 63/290 / NCTC 10512).